A 209-amino-acid polypeptide reads, in one-letter code: Large ribosomal subunit protein uL3 (209 aa).

The tract at residues 128 to 163 is disordered; that stretch reads AHRGPMTHGSKFHRAVGSMGASSDPSRTFKNKRMPG.

It belongs to the universal ribosomal protein uL3 family. In terms of assembly, part of the 50S ribosomal subunit. Forms a cluster with proteins L14 and L19.

In terms of biological role, one of the primary rRNA binding proteins, it binds directly near the 3'-end of the 23S rRNA, where it nucleates assembly of the 50S subunit. This is Large ribosomal subunit protein uL3 from Clostridium botulinum (strain 657 / Type Ba4).